Here is a 925-residue protein sequence, read N- to C-terminus: Protein translocase subunit SecA (925 aa).

Residues glutamine 87, 105 to 109 (GEGKT), and aspartate 515 each bind ATP. Residues cysteine 909, cysteine 911, cysteine 920, and histidine 921 each contribute to the Zn(2+) site.

This sequence belongs to the SecA family. In terms of assembly, monomer and homodimer. Part of the essential Sec protein translocation apparatus which comprises SecA, SecYEG and auxiliary proteins SecDF-YajC and YidC. Zn(2+) is required as a cofactor.

The protein localises to the cell inner membrane. Its subcellular location is the cytoplasm. It carries out the reaction ATP + H2O + cellular proteinSide 1 = ADP + phosphate + cellular proteinSide 2.. Functionally, part of the Sec protein translocase complex. Interacts with the SecYEG preprotein conducting channel. Has a central role in coupling the hydrolysis of ATP to the transfer of proteins into and across the cell membrane, serving both as a receptor for the preprotein-SecB complex and as an ATP-driven molecular motor driving the stepwise translocation of polypeptide chains across the membrane. This chain is Protein translocase subunit SecA, found in Cupriavidus taiwanensis (strain DSM 17343 / BCRC 17206 / CCUG 44338 / CIP 107171 / LMG 19424 / R1) (Ralstonia taiwanensis (strain LMG 19424)).